A 517-amino-acid polypeptide reads, in one-letter code: Putative thymidine phosphorylase (517 aa).

This sequence belongs to the thymidine/pyrimidine-nucleoside phosphorylase family. Type 2 subfamily.

The enzyme catalyses thymidine + phosphate = 2-deoxy-alpha-D-ribose 1-phosphate + thymine. This Legionella pneumophila (strain Paris) protein is Putative thymidine phosphorylase.